Consider the following 682-residue polypeptide: UvrABC system protein B (682 aa).

One can recognise a Helicase ATP-binding domain in the interval 27-414 (DNIRAGVAHQ…SEGIVVEQII (388 aa)). 40–47 (GVTGSGKT) is a binding site for ATP. The Beta-hairpin signature appears at 93–116 (YYDYYQPEAYVPTSDTYIEKDSSI). The Helicase C-terminal domain maps to 432–594 (QMEDLMTECR…IEPVSVRKSL (163 aa)). The interval 609–628 (AAKGRGKGRGRQAAPAQTAA) is disordered. One can recognise a UVR domain in the interval 642-677 (GGLIQRLEREMRESARDLEFEKAAELRDRIRMLRER).

This sequence belongs to the UvrB family. In terms of assembly, forms a heterotetramer with UvrA during the search for lesions. Interacts with UvrC in an incision complex.

Its subcellular location is the cytoplasm. In terms of biological role, the UvrABC repair system catalyzes the recognition and processing of DNA lesions. A damage recognition complex composed of 2 UvrA and 2 UvrB subunits scans DNA for abnormalities. Upon binding of the UvrA(2)B(2) complex to a putative damaged site, the DNA wraps around one UvrB monomer. DNA wrap is dependent on ATP binding by UvrB and probably causes local melting of the DNA helix, facilitating insertion of UvrB beta-hairpin between the DNA strands. Then UvrB probes one DNA strand for the presence of a lesion. If a lesion is found the UvrA subunits dissociate and the UvrB-DNA preincision complex is formed. This complex is subsequently bound by UvrC and the second UvrB is released. If no lesion is found, the DNA wraps around the other UvrB subunit that will check the other stand for damage. This chain is UvrABC system protein B, found in Oleidesulfovibrio alaskensis (strain ATCC BAA-1058 / DSM 17464 / G20) (Desulfovibrio alaskensis).